A 185-amino-acid polypeptide reads, in one-letter code: TRAF-interacting protein with FHA domain-containing protein A (185 aa).

Thr9 bears the Phosphothreonine mark. In terms of domain architecture, FHA spans Val48–Leu104.

It belongs to the TIFA family. As to quaternary structure, homooligomer; homooligomerizes following phosphorylation at Thr-9. Interacts with IRAK1, TRAF2 and TRAF6. Interacts with TIFAB; binding to TIFAB inhibits TRAF6 activation, possibly by inducing a conformational change in TIFA. Interacts with ZCCHC11; binding to ZCCHC11 suppresses the TRAF6-dependent activation of NF-kappa-B. Post-translationally, phosphorylated at Thr-9 following detection of ADP-D-glycero-beta-D-manno-heptose (ADP-Heptose) by ALPK1. Phosphorylation at Thr-9 by ALPK1 leads to the formation of an intermolecular binding between the FHA domain and phosphorylated Thr-9, promoting TIFA oligomerization and TIFA-mediated NF-kappa-B activation.

Its subcellular location is the cytoplasm. Its function is as follows. Adapter molecule that plays a key role in the activation of pro-inflammatory NF-kappa-B signaling following detection of bacterial pathogen-associated molecular pattern metabolites (PAMPs). Promotes activation of an innate immune response by inducing the oligomerization and polyubiquitination of TRAF6, which leads to the activation of TAK1 and IKK through a proteasome-independent mechanism. TIFA-dependent innate immune response is triggered by ADP-D-glycero-beta-D-manno-heptose (ADP-Heptose), a potent PAMP present in all Gram-negative and some Gram-positive bacteria: ADP-Heptose is recognized by ALPK1, which phosphorylates TIFA at Thr-9, leading to TIFA homooligomerization and subsequent activation of pro-inflammatory NF-kappa-B signaling. This Rattus norvegicus (Rat) protein is TRAF-interacting protein with FHA domain-containing protein A.